The primary structure comprises 95 residues: Large ribosomal subunit protein bL25 (95 aa).

It belongs to the bacterial ribosomal protein bL25 family. As to quaternary structure, part of the 50S ribosomal subunit; part of the 5S rRNA/L5/L18/L25 subcomplex. Contacts the 5S rRNA. Binds to the 5S rRNA independently of L5 and L18.

This is one of the proteins that binds to the 5S RNA in the ribosome where it forms part of the central protuberance. The sequence is that of Large ribosomal subunit protein bL25 from Chromobacterium violaceum (strain ATCC 12472 / DSM 30191 / JCM 1249 / CCUG 213 / NBRC 12614 / NCIMB 9131 / NCTC 9757 / MK).